We begin with the raw amino-acid sequence, 198 residues long: dITP/XTP pyrophosphatase (198 aa).

Substrate is bound at residue 7 to 12 (THNPHK). 2 residues coordinate Mg(2+): glutamate 40 and aspartate 69. Aspartate 69 (proton acceptor) is an active-site residue. Substrate contacts are provided by residues threonine 70, 151-154 (FGYD), lysine 174, and 179-180 (HR).

The protein belongs to the HAM1 NTPase family. As to quaternary structure, homodimer. Mg(2+) serves as cofactor.

It carries out the reaction XTP + H2O = XMP + diphosphate + H(+). It catalyses the reaction dITP + H2O = dIMP + diphosphate + H(+). The enzyme catalyses ITP + H2O = IMP + diphosphate + H(+). In terms of biological role, pyrophosphatase that catalyzes the hydrolysis of nucleoside triphosphates to their monophosphate derivatives, with a high preference for the non-canonical purine nucleotides XTP (xanthosine triphosphate), dITP (deoxyinosine triphosphate) and ITP. Seems to function as a house-cleaning enzyme that removes non-canonical purine nucleotides from the nucleotide pool, thus preventing their incorporation into DNA/RNA and avoiding chromosomal lesions. The polypeptide is dITP/XTP pyrophosphatase (Thermoanaerobacter sp. (strain X514)).